Consider the following 503-residue polypeptide: Probable cytosol aminopeptidase (503 aa).

The Mn(2+) site is built by lysine 270 and aspartate 275. Lysine 282 is an active-site residue. Aspartate 293, aspartate 352, and glutamate 354 together coordinate Mn(2+). Arginine 356 is a catalytic residue.

Belongs to the peptidase M17 family. The cofactor is Mn(2+).

The protein resides in the cytoplasm. It carries out the reaction Release of an N-terminal amino acid, Xaa-|-Yaa-, in which Xaa is preferably Leu, but may be other amino acids including Pro although not Arg or Lys, and Yaa may be Pro. Amino acid amides and methyl esters are also readily hydrolyzed, but rates on arylamides are exceedingly low.. The catalysed reaction is Release of an N-terminal amino acid, preferentially leucine, but not glutamic or aspartic acids.. Functionally, presumably involved in the processing and regular turnover of intracellular proteins. Catalyzes the removal of unsubstituted N-terminal amino acids from various peptides. This Escherichia fergusonii (strain ATCC 35469 / DSM 13698 / CCUG 18766 / IAM 14443 / JCM 21226 / LMG 7866 / NBRC 102419 / NCTC 12128 / CDC 0568-73) protein is Probable cytosol aminopeptidase.